The chain runs to 490 residues: Bifunctional IPC transferase and DIPP synthase (490 aa).

The segment at 72 to 290 (LMKAVILAAG…RANRALVSAA (219 aa)) is mobA-like NTP transferase. CTP contacts are provided by residues 78–80 (LAA), Lys91, Asp144, and Glu180. A Mg(2+)-binding site is contributed by Glu180. The CDP-alcohol phosphatidyltransferases stretch occupies residues 291–490 (VKGSGDGFIS…VTLLAVLVSK (200 aa)). The next 4 helical transmembrane spans lie at 329 to 349 (FLVGAFSALASFFSIPLAGLL), 389 to 409 (FLAIIALLYPKTATVAMFAIF), 447 to 467 (IFLIMIFCLLSAISLQWIFWM), and 468 to 488 (FLFVAAISLTRVVVTLLAVLV).

The protein in the N-terminal section; belongs to the MobA family. In the C-terminal section; belongs to the CDP-alcohol phosphatidyltransferase class-I family. As to quaternary structure, forms a mixture of monomers and dimers in solution, with prevalence of the monomeric form. It depends on Mg(2+) as a cofactor.

The protein localises to the membrane. It carries out the reaction 1D-myo-inositol 3-phosphate + CTP + H(+) = CDP-1L-myo-inositol + diphosphate. The enzyme catalyses CDP-1L-myo-inositol + 1D-myo-inositol 3-phosphate = bis(1L-myo-inositol) 3,1'-phosphate 1-phosphate + CMP + H(+). In terms of biological role, involved in biosynthesis of di-myo-inositol phosphate (DIP), a widespread organic solute in microorganisms adapted to hot environments. Catalyzes the condensation of CTP and L-myo-inositol-1-phosphate into CDP-L-myo-inositol, as well as the biosynthesis of di-myo-inositol-1,3'-phosphate-1'-phosphate (DIPP) from CDP-L-myo-inositol and L-myo-inositol-1-phosphate. The cytidylyltransferase is absolutely specific for CTP and L-myo-inositol-1-P. The DIPP synthase uses only L-myoinositol-1-phosphate as an alcohol acceptor, but CDP-glycerol, as well as CDP-L-myo-inositol and CDP-D-myoinositol, are recognized as alcohol donors. This Archaeoglobus fulgidus (strain ATCC 49558 / DSM 4304 / JCM 9628 / NBRC 100126 / VC-16) protein is Bifunctional IPC transferase and DIPP synthase.